A 141-amino-acid chain; its full sequence is Large ribosomal subunit protein uL11 (141 aa).

This sequence belongs to the universal ribosomal protein uL11 family. In terms of assembly, part of the ribosomal stalk of the 50S ribosomal subunit. Interacts with L10 and the large rRNA to form the base of the stalk. L10 forms an elongated spine to which L12 dimers bind in a sequential fashion forming a multimeric L10(L12)X complex. One or more lysine residues are methylated.

Its function is as follows. Forms part of the ribosomal stalk which helps the ribosome interact with GTP-bound translation factors. The sequence is that of Large ribosomal subunit protein uL11 from Nitratiruptor sp. (strain SB155-2).